The primary structure comprises 159 residues: Transcriptional repressor NrdR (159 aa).

The tract at residues 1–22 (MRCPFCGSEDTQVKDSRPAEDN) is disordered. A zinc finger lies at 3–34 (CPFCGSEDTQVKDSRPAEDNTSIRRRRICPDC). Over residues 11–22 (TQVKDSRPAEDN) the composition is skewed to basic and acidic residues. One can recognise an ATP-cone domain in the interval 49-139 (LMVIKKSGRK…VYRDFSHAED (91 aa)).

Belongs to the NrdR family. The cofactor is Zn(2+).

Functionally, negatively regulates transcription of bacterial ribonucleotide reductase nrd genes and operons by binding to NrdR-boxes. The polypeptide is Transcriptional repressor NrdR (Agrobacterium fabrum (strain C58 / ATCC 33970) (Agrobacterium tumefaciens (strain C58))).